Here is an 802-residue protein sequence, read N- to C-terminus: Sucrose synthase 1 (802 aa).

The interval 272–749 (MMFNVVILSP…GLQRIYEKYT (478 aa)) is GT-B glycosyltransferase.

It belongs to the glycosyltransferase 1 family. Plant sucrose synthase subfamily.

It catalyses the reaction an NDP-alpha-D-glucose + D-fructose = a ribonucleoside 5'-diphosphate + sucrose + H(+). Its function is as follows. Sucrose-cleaving enzyme that provides UDP-glucose and fructose for various metabolic pathways. Most active in the sink tissues where it is responsible for the breakdown of the arriving sucrose. The sequence is that of Sucrose synthase 1 (SH-1) from Zea mays (Maize).